The primary structure comprises 79 residues: Conotoxin Vi6.3 (79 aa).

A signal peptide spans 1 to 22 (MKLTCVLIITVLFLTASQLITA). The propeptide occupies 23 to 47 (DYSRDQRQYRAVRLGDEMRNFKGAR). Intrachain disulfides connect C49–C62, C56–C67, and C61–C77. 4-hydroxyproline occurs at positions 60 and 63.

The protein belongs to the conotoxin O1 superfamily. In terms of tissue distribution, expressed by the venom duct.

Its subcellular location is the secreted. Functionally, ion channel inhibitor that inhibits the increase in intracellular calcium upon depolarization in DRG neurons. In vivo, both intraperitoneal and intracranial injections into mice induce hyperactivity. The chain is Conotoxin Vi6.3 from Conus virgo (Virgin cone).